Reading from the N-terminus, the 209-residue chain is Large ribosomal subunit protein uL3 (209 aa).

Q150 carries the N5-methylglutamine modification.

This sequence belongs to the universal ribosomal protein uL3 family. Part of the 50S ribosomal subunit. Forms a cluster with proteins L14 and L19. In terms of processing, methylated by PrmB.

Its function is as follows. One of the primary rRNA binding proteins, it binds directly near the 3'-end of the 23S rRNA, where it nucleates assembly of the 50S subunit. In Cronobacter sakazakii (strain ATCC BAA-894) (Enterobacter sakazakii), this protein is Large ribosomal subunit protein uL3.